The sequence spans 537 residues: ATP-dependent 6-phosphofructokinase 5, chloroplastic (537 aa).

Residues M1–R52 constitute a chloroplast transit peptide. Residues R35–S64 are disordered. The segment covering S39–S54 has biased composition (low complexity). S147 is modified (phosphoserine). Residues G189, R253–G254, and G278–T281 contribute to the ATP site. Residue N279 coordinates Mg(2+). Substrate is bound by residues T307 to D309, M352 to R354, E408, and Y460 to R463. The active-site Proton acceptor is the D309.

It belongs to the phosphofructokinase type A (PFKA) family. PPi-dependent PFK group II subfamily. Atypical ATP-dependent clade 'X' sub-subfamily. As to quaternary structure, homotetramer. Mg(2+) is required as a cofactor. In terms of tissue distribution, expressed in roots, leaves, stems and flowers.

Its subcellular location is the plastid. The protein localises to the chloroplast. It carries out the reaction beta-D-fructose 6-phosphate + ATP = beta-D-fructose 1,6-bisphosphate + ADP + H(+). It participates in carbohydrate degradation; glycolysis; D-glyceraldehyde 3-phosphate and glycerone phosphate from D-glucose: step 3/4. Allosterically activated by AMP. Functionally, catalyzes the phosphorylation of D-fructose 6-phosphate to fructose 1,6-bisphosphate by ATP, the first committing step of glycolysis. This is ATP-dependent 6-phosphofructokinase 5, chloroplastic from Arabidopsis thaliana (Mouse-ear cress).